A 124-amino-acid polypeptide reads, in one-letter code: Riboflavin kinase (124 aa).

10-15 (GLGKAA) serves as a coordination point for CDP. Mg(2+)-binding residues include threonine 39 and asparagine 41. Residues threonine 93 and glutamate 101 each contribute to the FMN site. 106-109 (DKLR) contacts CDP.

The protein belongs to the archaeal riboflavin kinase family. It depends on Mg(2+) as a cofactor.

It carries out the reaction riboflavin + CTP = CDP + FMN + H(+). The protein operates within cofactor biosynthesis; FMN biosynthesis; FMN from riboflavin (CTP route): step 1/1. Functionally, catalyzes the CTP-dependent phosphorylation of riboflavin (vitamin B2) to form flavin mononucleotide (FMN). The polypeptide is Riboflavin kinase (Methanobrevibacter smithii (strain ATCC 35061 / DSM 861 / OCM 144 / PS)).